Consider the following 661-residue polypeptide: Ubiquitin carboxyl-terminal hydrolase 51 (661 aa).

A disordered region spans residues 1–144; the sequence is MRGTQGAQEM…SENSLLEVGS (144 aa). Over residues 21–30 the composition is skewed to polar residues; sequence TSENLTSRGS. A compositionally biased stretch (basic residues) spans 53 to 71; the sequence is PRRKPRPRPQPRSRSRGGR. Residues 75–96 show a composition bias toward pro residues; sequence APPPPPAKPPPPPPAPPPPPLP. The UBP-type zinc-finger motif lies at 149–267; that stretch reads TGCCHVESFK…KETKEKILGL (119 aa). Residues Cys151, His153, Cys192, Cys195, Cys205, Cys208, Cys213, His218, His222, His228, Cys241, and Cys244 each coordinate Zn(2+). Residues 320–656 form the USP domain; the sequence is RGLINLGNTC…EGYLLFYHRQ (337 aa). Cys329 serves as the catalytic Nucleophile. Catalysis depends on His615, which acts as the Proton acceptor.

Belongs to the peptidase C19 family. Interacts with H2A.

The protein localises to the chromosome. It catalyses the reaction Thiol-dependent hydrolysis of ester, thioester, amide, peptide and isopeptide bonds formed by the C-terminal Gly of ubiquitin (a 76-residue protein attached to proteins as an intracellular targeting signal).. Its function is as follows. Specifically deubiquitinates 'Lys-14' (H2AK13Ub) and 'Lys-16'(H2AK15Ub) of histone H2A regulating the DNA damage response at double-strand breaks (DSBs). USP51 is recruited to chromatin after DNA damage and regulates the dynamic assembly/disassembly of TP53BP1 and BRCA1. Functions in DNA double-strand break repair also by mediating the deubiquitination and subsequent stabilization of DGCR8, leading to the recruitment of DGCR8 binding partners to double strand breaks such as RNF168 or MDC1. In addition, promotes the deubiquitination and stabilization of the transcriptional repressor ZEB1. The sequence is that of Ubiquitin carboxyl-terminal hydrolase 51 from Mus musculus (Mouse).